A 242-amino-acid chain; its full sequence is Argininosuccinate synthase (242 aa).

It belongs to the argininosuccinate synthase family. Type 2 subfamily. As to quaternary structure, homotetramer.

The protein localises to the cytoplasm. The enzyme catalyses L-citrulline + L-aspartate + ATP = 2-(N(omega)-L-arginino)succinate + AMP + diphosphate + H(+). It participates in amino-acid biosynthesis; L-arginine biosynthesis; L-arginine from L-ornithine and carbamoyl phosphate: step 2/3. In Dickeya chrysanthemi (Pectobacterium chrysanthemi), this protein is Argininosuccinate synthase (argG).